Reading from the N-terminus, the 133-residue chain is Small ribosomal subunit protein uS8 (133 aa).

It belongs to the universal ribosomal protein uS8 family. In terms of assembly, part of the 30S ribosomal subunit. Contacts proteins S5 and S12.

Its function is as follows. One of the primary rRNA binding proteins, it binds directly to 16S rRNA central domain where it helps coordinate assembly of the platform of the 30S subunit. In Prochlorococcus marinus (strain SARG / CCMP1375 / SS120), this protein is Small ribosomal subunit protein uS8.